Reading from the N-terminus, the 96-residue chain is U-scoloptoxin(06)-Sm1a (96 aa).

Positions 1–23 (MNSFSFFLVIFVVLNLQVAKLMA) are cleaved as a signal peptide.

The protein belongs to the scoloptoxin-06 family. Post-translationally, contains 2 disulfide bonds. In terms of tissue distribution, expressed by the venom gland.

The protein resides in the secreted. This Scolopendra morsitans (Tanzanian blue ringleg centipede) protein is U-scoloptoxin(06)-Sm1a.